The chain runs to 473 residues: Chromosomal replication initiator protein DnaA (473 aa).

The domain I, interacts with DnaA modulators stretch occupies residues 1-87; the sequence is MADGEESISV…LAVTTFAIVV (87 aa). The segment at 87–132 is domain II; it reads VNPEIQQESLSTVGEPEPTPAPYLDVATFTVAPPAEITAPPRNGDT. The tract at residues 133–349 is domain III, AAA+ region; sequence RLNSKYSFDN…GTLIRVTAFA (217 aa). ATP-binding residues include glycine 177, glycine 179, lysine 180, and threonine 181. Residues 350–473 form a domain IV, binds dsDNA region; sequence SLNRTPVDMP…LTSRIKQNHR (124 aa).

Belongs to the DnaA family. As to quaternary structure, oligomerizes as a right-handed, spiral filament on DNA at oriC.

The protein localises to the cytoplasm. Plays an essential role in the initiation and regulation of chromosomal replication. ATP-DnaA binds to the origin of replication (oriC) to initiate formation of the DNA replication initiation complex once per cell cycle. Binds the DnaA box (a 9 base pair repeat at the origin) and separates the double-stranded (ds)DNA. Forms a right-handed helical filament on oriC DNA; dsDNA binds to the exterior of the filament while single-stranded (ss)DNA is stabiized in the filament's interior. The ATP-DnaA-oriC complex binds and stabilizes one strand of the AT-rich DNA unwinding element (DUE), permitting loading of DNA polymerase. After initiation quickly degrades to an ADP-DnaA complex that is not apt for DNA replication. Binds acidic phospholipids. The polypeptide is Chromosomal replication initiator protein DnaA (Leifsonia xyli subsp. xyli (strain CTCB07)).